The primary structure comprises 312 residues: RNA binding protein fox-1 homolog 3 (312 aa).

Over residues 1 to 29 the composition is skewed to pro residues; that stretch reads MAQPYPPAQYPPPPQNGIPAEYAPPPPHP. A disordered region spans residues 1 to 104; the sequence is MAQPYPPAQY…KQQPKRLHVS (104 aa). Polar residues predominate over residues 49 to 87; the sequence is TPAQTHPEQPGSEASTQPIAGTQTVPQTDEAAQTDSQPL. One can recognise an RRM domain in the interval 100–175; that stretch reads RLHVSNIPFR…RKIEVNNATA (76 aa). At Arg-223 the chain carries Asymmetric dimethylarginine; alternate. An Omega-N-methylarginine; alternate modification is found at Arg-223. Arg-272 carries the asymmetric dimethylarginine modification.

It is found in the nucleus. The protein resides in the cytoplasm. In terms of biological role, pre-mRNA alternative splicing regulator. Regulates alternative splicing of RBFOX2 to enhance the production of mRNA species that are targeted for nonsense-mediated decay (NMD). The protein is RNA binding protein fox-1 homolog 3 (RBFOX3) of Homo sapiens (Human).